The primary structure comprises 230 residues: Lipopolysaccharide core heptose(II) kinase WaaY (230 aa).

This sequence belongs to the protein kinase superfamily. RfaY/WaaY family.

It carries out the reaction alpha-D-Glc-(1-&gt;3)-[L-alpha-D-Hep-(1-&gt;7)]-L-alpha-D-Hep-(1-&gt;3)-4-O-PO3(2-)-L-alpha-D-Hep-(1-&gt;5)-[alpha-Kdo-(2-&gt;4)]-alpha-Kdo-(2-&gt;6)-lipid A + ATP = alpha-D-Glc-(1-&gt;3)-[L-alpha-D-Hep-(1-&gt;7)]-4-O-PO3(2-)-L-alpha-D-Hep-(1-&gt;3)-4-O-PO3(2-)-L-alpha-D-Hep-(1-&gt;5)-[alpha-Kdo-(2-&gt;4)]-alpha-Kdo-(2-&gt;6)-lipid A + ADP + H(+). It functions in the pathway bacterial outer membrane biogenesis; LPS core biosynthesis. Functionally, kinase involved in the biosynthesis of the core oligosaccharide region of lipopolysaccharide (LPS). Catalyzes the phosphorylation of the second heptose unit (HepII) of the inner core. This chain is Lipopolysaccharide core heptose(II) kinase WaaY, found in Escherichia coli.